The following is a 156-amino-acid chain: Transcriptional repressor NrdR (156 aa).

Residues 3–34 fold into a zinc finger; that stretch reads CPYCRHPDSRVVDSREAEEGAAIRRRRSCPNC. Positions 46 to 136 constitute an ATP-cone domain; the sequence is LSVVKRSGVT…VYRSFTSAED (91 aa).

The protein belongs to the NrdR family. The cofactor is Zn(2+).

Negatively regulates transcription of bacterial ribonucleotide reductase nrd genes and operons by binding to NrdR-boxes. This Nocardia farcinica (strain IFM 10152) protein is Transcriptional repressor NrdR.